The primary structure comprises 571 residues: MRVSKYLLSTQKETPANAEVISHQLMLRAGMIRRNASGLYSYLPTGLRVLRKVEAIVREEMNKAGAIEILMPMVQPADLWVETGRWEKFGPELLRFKDRHNRDFVLGPTHEEVITDLIRKEVSSYKQLPLNLYQIQTKFRDEVRPRFGMMRSREFLMKDAYSFHLDVDTMNETYEAMYNAYSNILTRMGLAFRPVLADTGSIGGSMSHEFHVLAQSGEDLIAYSTGSDYAANIEKAESPVPTEPRGAATEELCLVDTPNAKTIAELVEQFDLDITKTVKTLIVVGASEATPLVALIVRGDHELNEVKADKLDLVASPVEMAPEALIRDAIGAGPGSLGPIGLNIPIVIDHSVSVMSDFAAGANVDDKHYFGINWERDLPLAQVADIRNVVEGEPTPDGSGIYAMARGIEVGHIFQLGTNYSKSMNATVLDENGKSQVLLMGCYGVGVSRIVAAAIEQNFDDRGIIWPEAIAPFSVGILPMNMHKSHRVTDIAEQLYKDLNEAGIDVLLDDRKERPGVMFADMELIGIPHTVVIGDRNIDAGVFEYKNRRTGEKQDIPFDQLLDFLKNAVKG.

It belongs to the class-II aminoacyl-tRNA synthetase family. ProS type 1 subfamily. In terms of assembly, homodimer.

Its subcellular location is the cytoplasm. The enzyme catalyses tRNA(Pro) + L-proline + ATP = L-prolyl-tRNA(Pro) + AMP + diphosphate. Functionally, catalyzes the attachment of proline to tRNA(Pro) in a two-step reaction: proline is first activated by ATP to form Pro-AMP and then transferred to the acceptor end of tRNA(Pro). As ProRS can inadvertently accommodate and process non-cognate amino acids such as alanine and cysteine, to avoid such errors it has two additional distinct editing activities against alanine. One activity is designated as 'pretransfer' editing and involves the tRNA(Pro)-independent hydrolysis of activated Ala-AMP. The other activity is designated 'posttransfer' editing and involves deacylation of mischarged Ala-tRNA(Pro). The misacylated Cys-tRNA(Pro) is not edited by ProRS. The protein is Proline--tRNA ligase of Shewanella baltica (strain OS195).